Here is a 353-residue protein sequence, read N- to C-terminus: Glycerol-3-phosphate dehydrogenase [NAD(P)+] (353 aa).

NADPH contacts are provided by Trp-11, Arg-40, and Lys-115. 3 residues coordinate sn-glycerol 3-phosphate: Lys-115, Gly-156, and Ser-158. Ala-160 lines the NADPH pocket. Sn-glycerol 3-phosphate is bound by residues Lys-211, Asp-264, Ser-274, Arg-275, and Asn-276. The Proton acceptor role is filled by Lys-211. Arg-275 lines the NADPH pocket. Residues Val-299 and Glu-301 each contribute to the NADPH site.

It belongs to the NAD-dependent glycerol-3-phosphate dehydrogenase family.

The protein localises to the cytoplasm. The catalysed reaction is sn-glycerol 3-phosphate + NAD(+) = dihydroxyacetone phosphate + NADH + H(+). It carries out the reaction sn-glycerol 3-phosphate + NADP(+) = dihydroxyacetone phosphate + NADPH + H(+). It participates in membrane lipid metabolism; glycerophospholipid metabolism. Functionally, catalyzes the reduction of the glycolytic intermediate dihydroxyacetone phosphate (DHAP) to sn-glycerol 3-phosphate (G3P), the key precursor for phospholipid synthesis. This Polaromonas sp. (strain JS666 / ATCC BAA-500) protein is Glycerol-3-phosphate dehydrogenase [NAD(P)+].